A 289-amino-acid chain; its full sequence is Elongation factor Ts (289 aa).

Residues 80–83 (TDFV) are involved in Mg(2+) ion dislocation from EF-Tu.

This sequence belongs to the EF-Ts family.

Its subcellular location is the cytoplasm. Its function is as follows. Associates with the EF-Tu.GDP complex and induces the exchange of GDP to GTP. It remains bound to the aminoacyl-tRNA.EF-Tu.GTP complex up to the GTP hydrolysis stage on the ribosome. The protein is Elongation factor Ts of Francisella tularensis subsp. holarctica (strain LVS).